We begin with the raw amino-acid sequence, 345 residues long: Probable 3'(2'),5'-bisphosphate nucleotidase 4 (345 aa).

Aspartate 46 acts as the Proton acceptor in catalysis. Residues glutamate 71, aspartate 134, valine 136, and aspartate 137 each coordinate Mg(2+). Residue threonine 139 is the Proton acceptor of the active site. Adenosine 3',5'-bisphosphate is bound by residues threonine 139, serine 247, lysine 250, and arginine 264. 3 residues coordinate AMP: serine 247, lysine 250, and arginine 264.

This sequence belongs to the inositol monophosphatase superfamily. The cofactor is Mg(2+).

It carries out the reaction 3'-phosphoadenylyl sulfate + H2O = adenosine 5'-phosphosulfate + phosphate. It catalyses the reaction adenosine 3',5'-bisphosphate + H2O = AMP + phosphate. The enzyme catalyses adenosine 2',5'-bisphosphate + H2O = AMP + phosphate. The catalysed reaction is 1D-myo-inositol 1,4-bisphosphate + H2O = 1D-myo-inositol 4-phosphate + phosphate. It carries out the reaction 1D-myo-inositol 1,3,4-trisphosphate + H2O = 1D-myo-inositol 3,4-bisphosphate + phosphate. It participates in signal transduction; phosphatidylinositol signaling pathway. Phosphatase that converts adenosine 3'-phosphate 5'-phosphosulfate (PAPS) to adenosine 5'-phosphosulfate (APS) and 3'(2')-phosphoadenosine 5'-phosphate (PAP) to AMP. Is also able to hydrolyze inositol 1,4-bisphosphate and inositol 1,3,4-trisphosphate. The protein is Probable 3'(2'),5'-bisphosphate nucleotidase 4 (SAL4) of Arabidopsis thaliana (Mouse-ear cress).